We begin with the raw amino-acid sequence, 236 residues long: Uridylate kinase (236 aa).

An ATP-binding site is contributed by 10–13; the sequence is KLSG. Glycine 52 provides a ligand contact to UMP. ATP contacts are provided by glycine 53 and arginine 57. Residues aspartate 72 and 133–140 contribute to the UMP site; that span reads TGNPFFTT. Residues threonine 160, tyrosine 166, and aspartate 169 each coordinate ATP.

The protein belongs to the UMP kinase family. As to quaternary structure, homohexamer.

Its subcellular location is the cytoplasm. The catalysed reaction is UMP + ATP = UDP + ADP. It participates in pyrimidine metabolism; CTP biosynthesis via de novo pathway; UDP from UMP (UMPK route): step 1/1. Its activity is regulated as follows. Inhibited by UTP. Its function is as follows. Catalyzes the reversible phosphorylation of UMP to UDP. The protein is Uridylate kinase of Polaromonas sp. (strain JS666 / ATCC BAA-500).